Here is a 574-residue protein sequence, read N- to C-terminus: Excitatory amino acid transporter 2 (574 aa).

Topologically, residues 1–44 are cytoplasmic; the sequence is MASTEGANNMPKQVEVRMHDSHLGSEEPKHRHLGLRLCDKLGKN. Phosphoserine is present on residues serine 3, serine 21, and serine 25. Cysteine 38 carries S-palmitoyl cysteine lipidation. The chain crosses the membrane as a helical span at residues 45 to 64; it reads LLLTLTVFGVILGAVCGGLL. Residues 65 to 87 lie on the Extracellular side of the membrane; the sequence is RLASPIHPDVVMLIAFPGDILMR. Residues 88–108 traverse the membrane as a helical segment; it reads MLKMLILPLIISSLITGLSGL. At 109 to 120 the chain is on the cytoplasmic side; that stretch reads DAKASGRLGTRA. The helical transmembrane segment at 121-142 threads the bilayer; sequence MVYYMSTTIIAAVLGVILVLAI. Residues 143–235 are Extracellular-facing; it reads HPGNPKLKKQ…TKMVIKKGLE (93 aa). 2 N-linked (GlcNAc...) asparagine glycosylation sites follow: asparagine 206 and asparagine 216. Residues 236 to 259 traverse the membrane as a helical segment; it reads FKDGMNVLGLIGFFIAFGIAMGKM. Over 260 to 268 the chain is Cytoplasmic; it reads GDQAKLMVD. Residues 269 to 296 form a helical membrane-spanning segment; the sequence is FFNILNEIVMKLVIMIMWYSPLGIACLI. Residues 297-317 are Extracellular-facing; sequence CGKIIAIKDLEVVARQLGMYM. The chain crosses the membrane as a helical span at residues 318 to 339; sequence VTVIIGLIIHGGIFLPLIYFVV. Over 340–344 the chain is Cytoplasmic; it reads TRKNP. An intramembrane region (discontinuously helical) is located at residues 345 to 375; sequence FSFFAGIFQAWITALGTASSAGTLPVTFRCL. 362–364 contributes to the L-aspartate binding site; sequence ASS. Over 376 to 384 the chain is Cytoplasmic; that stretch reads EENLGIDKR. A helical transmembrane segment spans residues 385-411; sequence VTRFVLPVGATINMDGTALYEAVAAIF. Positions 393, 395, and 397 each coordinate Na(+). Threonine 401 serves as a coordination point for L-aspartate. Over 412–424 the chain is Extracellular; sequence IAQMNGVVLDGGQ. An intramembrane region (discontinuously helical) is located at residues 425–458; the sequence is IVTVSLTATLASVGAASIPSAGLVTMLLILTAVG. An L-aspartate-binding site is contributed by 442 to 446; the sequence is IPSAG. Over 459-471 the chain is Extracellular; that stretch reads LPTEDISLLVAVD. The helical transmembrane segment at 472–493 threads the bilayer; it reads WLLDRMRTSVNVVGDSFGAGIV. L-aspartate is bound by residues aspartate 475 and asparagine 482. Na(+)-binding residues include asparagine 482 and aspartate 486. Over 494–574 the chain is Cytoplasmic; the sequence is YHLSKSELDT…VEEEPWKREK (81 aa). Serine 506, serine 521, serine 532, and serine 534 each carry phosphoserine. Tyrosine 539 carries the post-translational modification Phosphotyrosine. Serine 544, serine 560, and serine 564 each carry phosphoserine.

The protein belongs to the dicarboxylate/amino acid:cation symporter (DAACS) (TC 2.A.23) family. SLC1A2 subfamily. As to quaternary structure, homotrimer. Isoform 3 can oligomerize with isoform 1. Interacts with AJUBA. Post-translationally, glycosylated. Palmitoylation at Cys-38 is not required for correct subcellular localization, but is important for glutamate uptake activity.

The protein resides in the cell membrane. It carries out the reaction K(+)(in) + L-glutamate(out) + 3 Na(+)(out) + H(+)(out) = K(+)(out) + L-glutamate(in) + 3 Na(+)(in) + H(+)(in). It catalyses the reaction K(+)(in) + L-aspartate(out) + 3 Na(+)(out) + H(+)(out) = K(+)(out) + L-aspartate(in) + 3 Na(+)(in) + H(+)(in). The enzyme catalyses D-aspartate(out) + K(+)(in) + 3 Na(+)(out) + H(+)(out) = D-aspartate(in) + K(+)(out) + 3 Na(+)(in) + H(+)(in). Sodium-dependent, high-affinity amino acid transporter that mediates the uptake of L-glutamate and also L-aspartate and D-aspartate. Functions as a symporter that transports one amino acid molecule together with two or three Na(+) ions and one proton, in parallel with the counter-transport of one K(+) ion. Mediates Cl(-) flux that is not coupled to amino acid transport; this avoids the accumulation of negative charges due to aspartate and Na(+) symport. Essential for the rapid removal of released glutamate from the synaptic cleft, and for terminating the postsynaptic action of glutamate. This chain is Excitatory amino acid transporter 2, found in Homo sapiens (Human).